Reading from the N-terminus, the 394-residue chain is Elongation factor Tu 1 (394 aa).

The tr-type G domain occupies 10–204; it reads KPHVNVGTIG…HLDTYIPEPE (195 aa). The G1 stretch occupies residues 19 to 26; sequence GHVDHGKT. A GTP-binding site is contributed by 19 to 26; sequence GHVDHGKT. Thr-26 contributes to the Mg(2+) binding site. The segment at 60–64 is G2; it reads GITIN. Positions 81-84 are G3; it reads DCPG. GTP contacts are provided by residues 81–85 and 136–139; these read DCPGH and NKCD. Positions 136 to 139 are G4; sequence NKCD. The tract at residues 174-176 is G5; that stretch reads SAL.

This sequence belongs to the TRAFAC class translation factor GTPase superfamily. Classic translation factor GTPase family. EF-Tu/EF-1A subfamily. As to quaternary structure, monomer.

It is found in the cytoplasm. It carries out the reaction GTP + H2O = GDP + phosphate + H(+). Functionally, GTP hydrolase that promotes the GTP-dependent binding of aminoacyl-tRNA to the A-site of ribosomes during protein biosynthesis. This chain is Elongation factor Tu 1, found in Haemophilus influenzae (strain 86-028NP).